The chain runs to 721 residues: YTH domain-containing protein 1 (721 aa).

The span at 29–38 (EADIAEELQD) shows a compositional bias: acidic residues. Residues 29-239 (EADIAEELQD…GGGTHSHSQK (211 aa)) are disordered. The span at 48 to 75 (SESNGGDSSDSEPSISSVSTATSSLAGS) shows a compositional bias: low complexity. The segment covering 135-151 (ASDKVKSKSPDTEDRQP) has biased composition (basic and acidic residues). The YTH domain occupies 254–391 (TRFFLIKSNN…KIGGELCRLF (138 aa)). Residues 260–262 (KSN), W276, and W327 each bind RNA. Disordered stretches follow at residues 424–471 (PPRS…RHHH), 580–605 (DGPG…DKAP), and 651–721 (AGGG…DNRR). Residues 432-443 (GHGGGGRGGGRG) show a composition bias toward gly residues. Over residues 451–471 (PMRHKRSYHGAPHHRPYRHHH) the composition is skewed to basic residues. Over residues 583–600 (GAPPLPDYPPPQRPPPPG) the composition is skewed to pro residues. The segment covering 651–670 (AGGGMGAGGGSGGGMGGPGG) has biased composition (gly residues). The segment covering 699–708 (RDSRPFRERG) has biased composition (basic and acidic residues).

Its subcellular location is the nucleus. In terms of biological role, regulator of alternative splicing that specifically recognizes and binds N6-methyladenosine (m6A)-containing RNAs. Acts by acting as a reader of m6A methylation. Required for sex determination and dosage compensation via Sxl alternative splicing: m6A methylation acts as a key regulator of Sxl pre-mRNA and promotes female-specific alternative splicing of Sxl, which determines female physiognomy. M6A methylation is also required for neuronal functions. The protein is YTH domain-containing protein 1 of Drosophila melanogaster (Fruit fly).